The sequence spans 95 residues: Co-chaperonin GroES (95 aa).

Residues 20–45 (KTKGGLIIPDSAKEKPAEGEITSVGE) form a disordered region.

Belongs to the GroES chaperonin family. Heptamer of 7 subunits arranged in a ring. Interacts with the chaperonin GroEL.

It is found in the cytoplasm. Functionally, together with the chaperonin GroEL, plays an essential role in assisting protein folding. The GroEL-GroES system forms a nano-cage that allows encapsulation of the non-native substrate proteins and provides a physical environment optimized to promote and accelerate protein folding. GroES binds to the apical surface of the GroEL ring, thereby capping the opening of the GroEL channel. In Paracoccus denitrificans, this protein is Co-chaperonin GroES.